The sequence spans 905 residues: Protein translocase subunit SecA (905 aa).

Residues Gln87, 105-109 (GEGKT), and Asp512 contribute to the ATP site. The disordered stretch occupies residues 565 to 584 (RRIDNQLRGRSGRQGDPGSS). Zn(2+)-binding residues include Cys886, Cys888, Cys897, and His898.

The protein belongs to the SecA family. Monomer and homodimer. Part of the essential Sec protein translocation apparatus which comprises SecA, SecYEG and auxiliary proteins SecDF-YajC and YidC. Zn(2+) is required as a cofactor.

Its subcellular location is the cell inner membrane. The protein resides in the cytoplasm. The enzyme catalyses ATP + H2O + cellular proteinSide 1 = ADP + phosphate + cellular proteinSide 2.. Part of the Sec protein translocase complex. Interacts with the SecYEG preprotein conducting channel. Has a central role in coupling the hydrolysis of ATP to the transfer of proteins into and across the cell membrane, serving both as a receptor for the preprotein-SecB complex and as an ATP-driven molecular motor driving the stepwise translocation of polypeptide chains across the membrane. The protein is Protein translocase subunit SecA of Haemophilus ducreyi (strain 35000HP / ATCC 700724).